The sequence spans 229 residues: MATWAQLNFQDAASPMMEQLHYFHDHTMMVLVIITIMVAYIMGTMFFNKDVNRYLLDGQKIETEWTIVPVFVLVIIAMPSLRLLYLLDEVNEPSITLKTIGHQWYWSYEYSDFKHIEFDSYMIPYNEMEESGLRLLEVDNRTTLPMQTQVRILITAADVLHSWTVPSLGIKVDATPGRLNQTSFFINRPGIFFGQCSEICGANHSFMPIMIESVNIKSFINWIQNMSEA.

Over 1 to 26 (MATWAQLNFQDAASPMMEQLHYFHDH) the chain is Mitochondrial intermembrane. Residues 27 to 48 (TMMVLVIITIMVAYIMGTMFFN) form a helical membrane-spanning segment. Over 49-62 (KDVNRYLLDGQKIE) the chain is Mitochondrial matrix. The chain crosses the membrane as a helical span at residues 63-82 (TEWTIVPVFVLVIIAMPSLR). The Mitochondrial intermembrane segment spans residues 83 to 229 (LLYLLDEVNE…INWIQNMSEA (147 aa)). The Cu cation site is built by H161, C196, E198, C200, H204, and M207. Mg(2+) is bound at residue E198.

This sequence belongs to the cytochrome c oxidase subunit 2 family. As to quaternary structure, component of the cytochrome c oxidase (complex IV, CIV), a multisubunit enzyme composed of a catalytic core of 3 subunits and several supernumerary subunits. The complex exists as a monomer or a dimer and forms supercomplexes (SCs) in the inner mitochondrial membrane with ubiquinol-cytochrome c oxidoreductase (cytochrome b-c1 complex, complex III, CIII). The cofactor is Cu cation.

The protein resides in the mitochondrion inner membrane. It carries out the reaction 4 Fe(II)-[cytochrome c] + O2 + 8 H(+)(in) = 4 Fe(III)-[cytochrome c] + 2 H2O + 4 H(+)(out). In terms of biological role, component of the cytochrome c oxidase, the last enzyme in the mitochondrial electron transport chain which drives oxidative phosphorylation. The respiratory chain contains 3 multisubunit complexes succinate dehydrogenase (complex II, CII), ubiquinol-cytochrome c oxidoreductase (cytochrome b-c1 complex, complex III, CIII) and cytochrome c oxidase (complex IV, CIV), that cooperate to transfer electrons derived from NADH and succinate to molecular oxygen, creating an electrochemical gradient over the inner membrane that drives transmembrane transport and the ATP synthase. Cytochrome c oxidase is the component of the respiratory chain that catalyzes the reduction of oxygen to water. Electrons originating from reduced cytochrome c in the intermembrane space (IMS) are transferred via the dinuclear copper A center (CU(A)) of subunit 2 and heme A of subunit 1 to the active site in subunit 1, a binuclear center (BNC) formed by heme A3 and copper B (CU(B)). The BNC reduces molecular oxygen to 2 water molecules using 4 electrons from cytochrome c in the IMS and 4 protons from the mitochondrial matrix. The protein is Cytochrome c oxidase subunit 2 (COII) of Sympetrum striolatum (Common darter dragonfly).